A 160-amino-acid chain; its full sequence is Putative pre-16S rRNA nuclease (160 aa).

Belongs to the YqgF nuclease family.

The protein localises to the cytoplasm. Functionally, could be a nuclease involved in processing of the 5'-end of pre-16S rRNA. The chain is Putative pre-16S rRNA nuclease from Jannaschia sp. (strain CCS1).